Consider the following 44-residue polypeptide: Thymosin beta-4 (44 aa).

A compositionally biased stretch (basic and acidic residues) spans 1–25 (MADKPDMAEIEKFDKSKLKKTETQE). A disordered region spans residues 1-44 (MADKPDMAEIEKFDKSKLKKTETQEKNPLPSKETIEQEKQAGES). Position 2 is an N-acetylalanine (Ala2). Position 4 is an N6-acetyllysine (Lys4). An N6-acetyllysine; alternate modification is found at Lys12. A Glycyl lysine isopeptide (Lys-Gly) (interchain with G-Cter in SUMO2); alternate cross-link involves residue Lys12. Residue Thr23 is modified to Phosphothreonine. N6-acetyllysine is present on Lys26. Ser31 is modified (phosphoserine). Position 32 is an N6-acetyllysine (Lys32). A compositionally biased stretch (basic and acidic residues) spans 33–44 (ETIEQEKQAGES). Thr34 bears the Phosphothreonine mark. Residue Lys39 is modified to N6-acetyllysine.

This sequence belongs to the thymosin beta family. In terms of tissue distribution, originally found in thymus but it is widely distributed in many tissues.

It localises to the cytoplasm. The protein localises to the cytoskeleton. Its function is as follows. Plays an important role in the organization of the cytoskeleton. Binds to and sequesters actin monomers (G actin) and therefore inhibits actin polymerization. In terms of biological role, seraspenide inhibits the entry of hematopoietic pluripotent stem cells into the S-phase. This is Thymosin beta-4 (TMSB4) from Oryctolagus cuniculus (Rabbit).